Here is a 539-residue protein sequence, read N- to C-terminus: CTP synthase (539 aa).

The interval M1–L267 is amidoligase domain. S13 contributes to the CTP binding site. Position 13 (S13) interacts with UTP. Residue S14 to I19 coordinates ATP. An L-glutamine-binding site is contributed by Y54. D71 serves as a coordination point for ATP. Mg(2+) is bound by residues D71 and E141. CTP is bound by residues D148 to E150, K188 to Q193, and K224. Residues K188–Q193 and K224 each bind UTP. Positions K294 to Q537 constitute a Glutamine amidotransferase type-1 domain. G356 provides a ligand contact to L-glutamine. C383 acts as the Nucleophile; for glutamine hydrolysis in catalysis. L-glutamine contacts are provided by residues L384–Q387, E407, and R465. Active-site residues include H510 and E512.

The protein belongs to the CTP synthase family. In terms of assembly, homotetramer.

It carries out the reaction UTP + L-glutamine + ATP + H2O = CTP + L-glutamate + ADP + phosphate + 2 H(+). The catalysed reaction is L-glutamine + H2O = L-glutamate + NH4(+). It catalyses the reaction UTP + NH4(+) + ATP = CTP + ADP + phosphate + 2 H(+). It functions in the pathway pyrimidine metabolism; CTP biosynthesis via de novo pathway; CTP from UDP: step 2/2. Its activity is regulated as follows. Allosterically activated by GTP, when glutamine is the substrate; GTP has no effect on the reaction when ammonia is the substrate. The allosteric effector GTP functions by stabilizing the protein conformation that binds the tetrahedral intermediate(s) formed during glutamine hydrolysis. Inhibited by the product CTP, via allosteric rather than competitive inhibition. In terms of biological role, catalyzes the ATP-dependent amination of UTP to CTP with either L-glutamine or ammonia as the source of nitrogen. Regulates intracellular CTP levels through interactions with the four ribonucleotide triphosphates. This chain is CTP synthase, found in Lactobacillus acidophilus (strain ATCC 700396 / NCK56 / N2 / NCFM).